The chain runs to 1354 residues: Phosphoribosylformylglycinamidine synthase (1354 aa).

ATP-binding positions include 327-338 (GATTGTGGRLRD), 407-409 (SGF), and Ala714. Mg(2+)-binding residues include Asp715, Glu754, Asn758, and Asp918. Ser920 lines the ATP pocket. Positions 1087-1337 (VAVLREEGVN…EVSPTQSESP (251 aa)) constitute a Glutamine amidotransferase type-1 domain. Cys1180 functions as the Nucleophile in the catalytic mechanism. Catalysis depends on residues His1310 and Glu1312.

The protein in the N-terminal section; belongs to the FGAMS family.

It carries out the reaction N(2)-formyl-N(1)-(5-phospho-beta-D-ribosyl)glycinamide + L-glutamine + ATP + H2O = 2-formamido-N(1)-(5-O-phospho-beta-D-ribosyl)acetamidine + L-glutamate + ADP + phosphate + H(+). Its pathway is purine metabolism; IMP biosynthesis via de novo pathway; 5-amino-1-(5-phospho-D-ribosyl)imidazole from N(2)-formyl-N(1)-(5-phospho-D-ribosyl)glycinamide: step 1/2. Functionally, phosphoribosylformylglycinamidine synthase involved in the purines biosynthetic pathway. Catalyzes the ATP-dependent conversion of formylglycinamide ribonucleotide (FGAR) and glutamine to yield formylglycinamidine ribonucleotide (FGAM) and glutamate. Because of its role in metabolisms, is involved in sleep regulation. The sequence is that of Phosphoribosylformylglycinamidine synthase from Drosophila melanogaster (Fruit fly).